The primary structure comprises 380 residues: Cystathionine beta-lyase (380 aa).

N6-(pyridoxal phosphate)lysine is present on Lys-196.

Belongs to the trans-sulfuration enzymes family. It depends on pyridoxal 5'-phosphate as a cofactor.

Its subcellular location is the cytoplasm. The catalysed reaction is L,L-cystathionine + H2O = L-homocysteine + pyruvate + NH4(+). The enzyme catalyses an S-substituted L-cysteine + H2O = a thiol + pyruvate + NH4(+). Its pathway is amino-acid biosynthesis; L-methionine biosynthesis via de novo pathway; L-homocysteine from L-cystathionine: step 1/1. In terms of biological role, the enzymatic degradation of amino acids in cheese is believed to generate aroma compounds and therefore to be essential for flavor development. Cystathionine beta-lyase (CBL) can convert cystathionine to homocysteine but is also able to catalyze an alpha, gamma elimination. With methionine as a substrate, it produces volatile sulfur compounds which are important for flavor formation in Gouda cheese. In Lactococcus lactis subsp. cremoris (Streptococcus cremoris), this protein is Cystathionine beta-lyase (metC).